A 1494-amino-acid chain; its full sequence is ABC multidrug transporter atrG (1494 aa).

The segment covering methionine 1–leucine 11 has biased composition (polar residues). 2 disordered regions span residues methionine 1–aspartate 48 and phenylalanine 84–proline 105. The N-linked (GlcNAc...) asparagine glycan is linked to asparagine 41. Residues asparagine 141 and asparagine 340 are each glycosylated (N-linked (GlcNAc...) asparagine). The region spanning leucine 162–glutamate 416 is the ABC transporter 1 domain. 2 consecutive transmembrane segments (helical) span residues leucine 527–tyrosine 547 and alanine 561–leucine 581. N-linked (GlcNAc...) asparagine glycosylation occurs at asparagine 622. The next 3 membrane-spanning stretches (helical) occupy residues glycine 636–phenylalanine 656, alanine 669–proline 689, and glycine 778–isoleucine 798. N-linked (GlcNAc...) asparagine glycosylation is present at asparagine 835. One can recognise an ABC transporter 2 domain in the interval phenylalanine 852–alanine 1095. Residue glycine 888–threonine 895 coordinates ATP. Transmembrane regions (helical) follow at residues tyrosine 1191–phenylalanine 1211, isoleucine 1227–threonine 1247, leucine 1276–leucine 1296, leucine 1312–isoleucine 1332, and leucine 1351–phenylalanine 1371. Residues asparagine 1410 and asparagine 1432 are each glycosylated (N-linked (GlcNAc...) asparagine). A helical membrane pass occupies residues phenylalanine 1463 to leucine 1483.

It belongs to the ABC transporter superfamily. ABCG family. PDR (TC 3.A.1.205) subfamily.

Its subcellular location is the cell membrane. It carries out the reaction (R)-miconazole(in) + ATP + H2O = (R)-miconazole(out) + ADP + phosphate + H(+). Its function is as follows. Pleiotropic ABC efflux transporter involved in the basal level of azole susceptibility. Confers resistance to miconazole and clotrimazole. This chain is ABC multidrug transporter atrG, found in Aspergillus oryzae (strain ATCC 42149 / RIB 40) (Yellow koji mold).